The following is a 431-amino-acid chain: uncharacterized protein (431 aa).

This is an uncharacterized protein from Acanthamoeba polyphaga (Amoeba).